We begin with the raw amino-acid sequence, 354 residues long: Membrane progestin receptor beta (354 aa).

Residues 1–75 are Cytoplasmic-facing; the sequence is MTTAILERLS…FFSLFQKHNE (75 aa). Residues 76–96 traverse the membrane as a helical segment; sequence VVNVWTHLLAALAVLLRFWAF. Topologically, residues 97-111 are extracellular; that stretch reads AEAEALPWASTHSLP. A helical membrane pass occupies residues 112 to 132; sequence LLLFILSSITYLTCSLLAHLL. The Cytoplasmic segment spans residues 133–174; the sequence is QSKSELSHYTFYFVDYVGVSVYQYGSALAHFFYSSDQAWYDR. Residues 175 to 195 form a helical membrane-spanning segment; the sequence is FWLFFLPAAAFCGWLSCAGCC. Residues 196–213 are Extracellular-facing; the sequence is YAKYRYRRPYPVMRKICQ. Residues 214–234 traverse the membrane as a helical segment; sequence VVPAGLAFILDISPVAHRVAL. Over 235–243 the chain is Cytoplasmic; sequence CHLAGCQEQ. A helical membrane pass occupies residues 244–264; the sequence is AAWYHTLQILFFLVSAYFFSC. The Extracellular segment spans residues 265 to 283; that stretch reads PVPEKYFPGSCDIVGHGHQ. Residues 284–304 traverse the membrane as a helical segment; the sequence is IFHAFLSICTLSQLEAILLDY. The Cytoplasmic segment spans residues 305 to 319; sequence QGRQEIFLQRHGPLS. Residues 320-340 traverse the membrane as a helical segment; that stretch reads VHMACLSFFFLAACSAATAAL. The Extracellular portion of the chain corresponds to 341–354; it reads LRHKVKARLTKKDS.

It belongs to the ADIPOR family. As to expression, highly expressed in the hypothalamus. Also expressed in spinal cord, kidney and testis.

It localises to the cell membrane. Plasma membrane progesterone (P4) receptor coupled to G proteins. Seems to act through a G(i) mediated pathway. May be involved in oocyte maturation. Also binds dehydroepiandrosterone (DHEA), pregnanolone, pregnenolone and allopregnanolone. This is Membrane progestin receptor beta from Homo sapiens (Human).